Consider the following 232-residue polypeptide: MSQYQNQYGAQTGMTDEYGNPVNQVDQYGNPISGGGGLTGEAGRQHYGTTGGATGQGHGHGQQHRGVDQTTGYGTHTGGVGGYGTKPEYGSTNTGSGYGTGTGYGGSGTNPDYGSTNTGSGYGTGTGYGGSGTTEYVREEHHGDKKGVMDKIKEKIPGTEQSRTNTDGTGYGSTGQGYVREQQHGTGYGSTGQGYVREQQDVHHGDEQHGEKKGIMEKIKEKLPGTGACTGH.

Residues 1–14 (MSQYQNQYGAQTGM) are compositionally biased toward polar residues. Disordered stretches follow at residues 1–66 (MSQY…QHRG) and 140–232 (EHHG…CTGH). The span at 49–60 (TTGGATGQGHGH) shows a compositional bias: gly residues. Positions 140-157 (EHHGDKKGVMDKIKEKIP) are enriched in basic and acidic residues. A compositionally biased stretch (polar residues) spans 159–168 (TEQSRTNTDG). Residues 198–223 (EQQDVHHGDEQHGEKKGIMEKIKEKL) show a composition bias toward basic and acidic residues.

Belongs to the plant dehydrin family.

The protein is Dehydrin DHN3 (DHN3) of Pisum sativum (Garden pea).